A 326-amino-acid polypeptide reads, in one-letter code: tRNA-modifying protein YgfZ (326 aa).

Trp27 and Trp189 together coordinate folate.

It belongs to the tRNA-modifying YgfZ family.

It localises to the cytoplasm. In terms of biological role, folate-binding protein involved in regulating the level of ATP-DnaA and in the modification of some tRNAs. It is probably a key factor in regulatory networks that act via tRNA modification, such as initiation of chromosomal replication. In Escherichia coli (strain SMS-3-5 / SECEC), this protein is tRNA-modifying protein YgfZ.